The chain runs to 252 residues: 2-succinyl-6-hydroxy-2,4-cyclohexadiene-1-carboxylate synthase (252 aa).

This sequence belongs to the AB hydrolase superfamily. MenH family. As to quaternary structure, monomer.

The enzyme catalyses 5-enolpyruvoyl-6-hydroxy-2-succinyl-cyclohex-3-ene-1-carboxylate = (1R,6R)-6-hydroxy-2-succinyl-cyclohexa-2,4-diene-1-carboxylate + pyruvate. The protein operates within quinol/quinone metabolism; 1,4-dihydroxy-2-naphthoate biosynthesis; 1,4-dihydroxy-2-naphthoate from chorismate: step 3/7. It functions in the pathway quinol/quinone metabolism; menaquinone biosynthesis. Functionally, catalyzes a proton abstraction reaction that results in 2,5-elimination of pyruvate from 2-succinyl-5-enolpyruvyl-6-hydroxy-3-cyclohexene-1-carboxylate (SEPHCHC) and the formation of 2-succinyl-6-hydroxy-2,4-cyclohexadiene-1-carboxylate (SHCHC). This chain is 2-succinyl-6-hydroxy-2,4-cyclohexadiene-1-carboxylate synthase, found in Salmonella agona (strain SL483).